Here is a 267-residue protein sequence, read N- to C-terminus: L-aspartate dehydrogenase (267 aa).

Alanine 124 and asparagine 190 together coordinate NAD(+). Residue histidine 218 is part of the active site.

Belongs to the L-aspartate dehydrogenase family.

It catalyses the reaction L-aspartate + NADP(+) + H2O = oxaloacetate + NH4(+) + NADPH + H(+). The catalysed reaction is L-aspartate + NAD(+) + H2O = oxaloacetate + NH4(+) + NADH + H(+). It functions in the pathway cofactor biosynthesis; NAD(+) biosynthesis; iminoaspartate from L-aspartate (dehydrogenase route): step 1/1. In terms of biological role, specifically catalyzes the NAD or NADP-dependent dehydrogenation of L-aspartate to iminoaspartate. The sequence is that of L-aspartate dehydrogenase from Methanococcus maripaludis (strain C7 / ATCC BAA-1331).